The following is a 344-amino-acid chain: 5,10-methenyltetrahydromethanopterin hydrogenase (344 aa).

Belongs to the HMD family. Homotetramer.

The catalysed reaction is 5,10-methenyl-5,6,7,8-tetrahydromethanopterin + H2 = 5,10-methylenetetrahydromethanopterin + H(+). Its pathway is one-carbon metabolism; methanogenesis from CO(2); 5,10-methylene-5,6,7,8-tetrahydromethanopterin from 5,10-methenyl-5,6,7,8-tetrahydromethanopterin (hydrogen route): step 1/1. Its activity is regulated as follows. Activity requires salt; 100 mM sodium or potassium salts of chloride, phosphate or sulfate are equally effective. Inactivated by O(2). Functionally, catalyzes the reversible reduction of methenyl-H(4)MPT(+) to methylene-H(4)MPT. The sequence is that of 5,10-methenyltetrahydromethanopterin hydrogenase from Methanothermobacter marburgensis (strain ATCC BAA-927 / DSM 2133 / JCM 14651 / NBRC 100331 / OCM 82 / Marburg) (Methanobacterium thermoautotrophicum).